Consider the following 729-residue polypeptide: 1,4-alpha-glucan branching enzyme GlgB 2 (729 aa).

Asp408 acts as the Nucleophile in catalysis. Residue Glu461 is the Proton donor of the active site.

This sequence belongs to the glycosyl hydrolase 13 family. GlgB subfamily. Monomer.

The enzyme catalyses Transfers a segment of a (1-&gt;4)-alpha-D-glucan chain to a primary hydroxy group in a similar glucan chain.. It participates in glycan biosynthesis; glycogen biosynthesis. Functionally, catalyzes the formation of the alpha-1,6-glucosidic linkages in glycogen by scission of a 1,4-alpha-linked oligosaccharide from growing alpha-1,4-glucan chains and the subsequent attachment of the oligosaccharide to the alpha-1,6 position. The protein is 1,4-alpha-glucan branching enzyme GlgB 2 of Xanthomonas campestris pv. campestris (strain 8004).